The chain runs to 176 residues: Peptide methionine sulfoxide reductase MsrA (176 aa).

Cys-10 is a catalytic residue.

It belongs to the MsrA Met sulfoxide reductase family.

It catalyses the reaction L-methionyl-[protein] + [thioredoxin]-disulfide + H2O = L-methionyl-(S)-S-oxide-[protein] + [thioredoxin]-dithiol. The catalysed reaction is [thioredoxin]-disulfide + L-methionine + H2O = L-methionine (S)-S-oxide + [thioredoxin]-dithiol. In terms of biological role, has an important function as a repair enzyme for proteins that have been inactivated by oxidation. Catalyzes the reversible oxidation-reduction of methionine sulfoxide in proteins to methionine. In Chromobacterium violaceum (strain ATCC 12472 / DSM 30191 / JCM 1249 / CCUG 213 / NBRC 12614 / NCIMB 9131 / NCTC 9757 / MK), this protein is Peptide methionine sulfoxide reductase MsrA.